The primary structure comprises 154 residues: uncharacterized protein (154 aa).

The signal sequence occupies residues 1 to 21 (MSISSGSFAQPAAVVSSPGVT).

Belongs to the ivy family.

The protein localises to the periplasm. This is an uncharacterized protein from Yersinia pestis.